We begin with the raw amino-acid sequence, 141 residues long: uncharacterized protein (141 aa).

One can recognise a MaoC-like domain in the interval 8 to 112 (IGQVFKTKSL…VLDKQPKRNE (105 aa)).

This is an uncharacterized protein from Bacillus subtilis (strain 168).